A 1059-amino-acid polypeptide reads, in one-letter code: IQ motif-containing protein H (1059 aa).

Positions 6 to 35 form a coiled coil; it reads KNKDEVGNILVKVQDDLRQLKKNIVQFTVQ. Positions 245–267 are disordered; that stretch reads MESAESRLLRAPPPSAASASSDN. Residues 401 to 430 form the IQ domain; sequence HQAAAVRIQTCWRRYSARTAYLIRLRSKWA.

The protein is IQ motif-containing protein H (iqch) of Danio rerio (Zebrafish).